The following is a 375-amino-acid chain: 23S rRNA (uracil(747)-C(5))-methyltransferase RlmC (375 aa).

[4Fe-4S] cluster-binding residues include C3, C11, C14, and C87. Residues Q212, F241, E262, and N307 each contribute to the S-adenosyl-L-methionine site. C334 (nucleophile) is an active-site residue.

Belongs to the class I-like SAM-binding methyltransferase superfamily. RNA M5U methyltransferase family. RlmC subfamily.

It carries out the reaction uridine(747) in 23S rRNA + S-adenosyl-L-methionine = 5-methyluridine(747) in 23S rRNA + S-adenosyl-L-homocysteine + H(+). Its function is as follows. Catalyzes the formation of 5-methyl-uridine at position 747 (m5U747) in 23S rRNA. The polypeptide is 23S rRNA (uracil(747)-C(5))-methyltransferase RlmC (Escherichia coli O9:H4 (strain HS)).